A 164-amino-acid polypeptide reads, in one-letter code: HTH-type transcriptional regulator IscR (164 aa).

Positions 2–131 (RLTSKGRYAV…SSISLEELVN (130 aa)) constitute an HTH rrf2-type domain. The H-T-H motif DNA-binding region spans 28-51 (LADISERQGISLSYLEQLFSRLRK). Residues Cys92, Cys98, and Cys104 each coordinate [2Fe-2S] cluster. The interval 141–164 (RQDNDKRRAPNGRAQETINVNLRP) is disordered. A compositionally biased stretch (polar residues) spans 154–164 (AQETINVNLRP).

It depends on [2Fe-2S] cluster as a cofactor.

Regulates the transcription of several operons and genes involved in the biogenesis of Fe-S clusters and Fe-S-containing proteins. The sequence is that of HTH-type transcriptional regulator IscR from Photorhabdus laumondii subsp. laumondii (strain DSM 15139 / CIP 105565 / TT01) (Photorhabdus luminescens subsp. laumondii).